We begin with the raw amino-acid sequence, 172 residues long: Adenine phosphoribosyltransferase (172 aa).

This sequence belongs to the purine/pyrimidine phosphoribosyltransferase family. Homodimer.

The protein localises to the cytoplasm. It carries out the reaction AMP + diphosphate = 5-phospho-alpha-D-ribose 1-diphosphate + adenine. It participates in purine metabolism; AMP biosynthesis via salvage pathway; AMP from adenine: step 1/1. Catalyzes a salvage reaction resulting in the formation of AMP, that is energically less costly than de novo synthesis. The polypeptide is Adenine phosphoribosyltransferase (Ligilactobacillus salivarius (strain UCC118) (Lactobacillus salivarius)).